Reading from the N-terminus, the 376-residue chain is tRNA-specific 2-thiouridylase MnmA (376 aa).

Residues 16–23 (AMSGGVDS) and Leu-42 contribute to the ATP site. Cys-111 functions as the Nucleophile in the catalytic mechanism. A disulfide bond links Cys-111 and Cys-210. Gly-135 is an ATP binding site. Positions 158-160 (KDQ) are interaction with tRNA. Cys-210 (cysteine persulfide intermediate) is an active-site residue.

The protein belongs to the MnmA/TRMU family.

It localises to the cytoplasm. It catalyses the reaction S-sulfanyl-L-cysteinyl-[protein] + uridine(34) in tRNA + AH2 + ATP = 2-thiouridine(34) in tRNA + L-cysteinyl-[protein] + A + AMP + diphosphate + H(+). Catalyzes the 2-thiolation of uridine at the wobble position (U34) of tRNA, leading to the formation of s(2)U34. The polypeptide is tRNA-specific 2-thiouridylase MnmA (Streptomyces avermitilis (strain ATCC 31267 / DSM 46492 / JCM 5070 / NBRC 14893 / NCIMB 12804 / NRRL 8165 / MA-4680)).